The primary structure comprises 70 residues: Brevinin-ALb (70 aa).

Positions 1–22 (MFTLKKSLLLLFFLGTINLSLC) are cleaved as a signal peptide. A propeptide spanning residues 23 to 46 (EQERDADEEERRDDDEMDVEVEKR) is cleaved from the precursor. Residues Cys64 and Cys70 are joined by a disulfide bond.

Expressed by the skin glands.

Its subcellular location is the secreted. Its function is as follows. Antimicrobial peptide with activity against Gram-positive and Gram-negative bacteria and against fungi. Has been tested against S.aureus (MIC=5.5 ug/mL), E.coli (MIC=6.5 ug/mL), B.dysenteriae (MIC=2.2 ug/mL), and C.albicans (MIC=7.5 ug/mL). Can regulate or mediate antimicrobial response by stimulating mast cell degranulation. Induces histamine release. Shows cytotoxicity toward solid tumor cell line HepG2. Also shows a potent hemolytic activity (LD(50)=5 ug/ml). This is Brevinin-ALb from Amolops loloensis (Lolokou Sucker Frog).